The following is a 1148-amino-acid chain: Envelopment polyprotein (1148 aa).

The N-terminal stretch at 1-23 is a signal peptide; that stretch reads MGELSPVCLCLLLQGLLLCNTGA. Over 24–496 the chain is Lumenal; that stretch reads ARNLNELKME…PGLHGWATML (473 aa). 6 disulfides stabilise this stretch: cysteine 34-cysteine 159, cysteine 68-cysteine 165, cysteine 117-cysteine 136, cysteine 141-cysteine 146, cysteine 183-cysteine 193, and cysteine 218-cysteine 257. Asparagine 142 carries N-linked (GlcNAc...) asparagine; by host glycosylation. Asparagine 357 carries an N-linked (GlcNAc...) asparagine; by host glycan. Intrachain disulfides connect cysteine 386/cysteine 445, cysteine 390/cysteine 399, cysteine 415/cysteine 434, and cysteine 462/cysteine 485. Asparagine 409 carries an N-linked (GlcNAc...) asparagine; by host glycan. The helical transmembrane segment at 497-517 threads the bilayer; the sequence is LLLTFCFGWVLIPTITMILLK. The Cytoplasmic segment spans residues 518 to 637; the sequence is ILIAFAYLCS…LSLFRYRSRF (120 aa). The binding to the ribonucleoprotein stretch occupies residues 526 to 543; sequence CSKYNTDSKFRILIEKVK. CCHC-type zinc fingers lie at residues 555 to 575 and 580 to 601; these read CEVC…RKSC and CPYC…FKVC. Binding to the ribonucleoprotein regions lie at residues 598–615, 602–613, and 621–635; these read FKVC…RKSL, KLTSRFQENLRK, and MQGC…RYRS. An ITAM domain is found at 621–644; sequence MQGCYRTLSLFRYRSRFFVGLVWC. Positions 625-628 match the YxxL motif; the sequence is YRTL. Residues 638 to 658 traverse the membrane as a helical segment; the sequence is FVGLVWCVLLVLELIVWAASA. Topologically, residues 659–1115 are lumenal; sequence ETQNLNAGWT…WILGVLNGNW (457 aa). Cystine bridges form between cysteine 745–cysteine 780, cysteine 749–cysteine 787, cysteine 761–cysteine 894, cysteine 775–cysteine 905, cysteine 790–cysteine 913, cysteine 816–cysteine 825, cysteine 833–cysteine 842, and cysteine 873–cysteine 877. Residues 767 to 787 are fusion loop; sequence YEYETGWGCNPPDCPGVGTGC. A glycan (N-linked (GlcNAc...) asparagine; by host) is linked at asparagine 937. 5 disulfide bridges follow: cysteine 979–cysteine 1009, cysteine 1002–cysteine 1054, cysteine 1019–cysteine 1024, cysteine 1055–cysteine 1060, and cysteine 1094–cysteine 1098. The chain crosses the membrane as a helical span at residues 1116–1136; the sequence is MVVAVLVVLLILSILLFTLCC. 2 binding to the ribonucleoprotein regions span residues 1131 to 1143 and 1131 to 1148; these read LFTL…PSYR and LFTL…EHKP. Topologically, residues 1137-1148 are cytoplasmic; sequence PRRPSYRKEHKP.

It belongs to the hantavirus envelope glycoprotein family. Homodimer. Homotetramer; forms heterotetrameric Gn-Gc spikes in the pre-fusion conformation. Interacts (via C-terminus) with the nucleoprotein. Interacts with host TUFM; this interaction contributes to the virus-induced degradation of mitochondria by autophagy, which leads to degradation of host MAVS and inhibition of type I interferon (IFN) responses. Interacts with host MAP1LC3B; this interaction contributes to the virus-induced degradation of mitochondria by autophagy, which leads to degradation of host MAVS and inhibition of type I interferon (IFN) responses. In terms of assembly, homodimer. Homotetramer; forms heterotetrameric Gn-Gc spikes in the pre-fusion conformation. Homotrimer; forms homotrimer in the post-fusion conformation at acidic pH. Interacts (via C-terminus) with the nucleoprotein. Post-translationally, envelope polyprotein precursor is quickly cleaved in vivo just after synthesis, presumably by host signal peptidase.

The protein localises to the virion membrane. It localises to the host cell surface. The protein resides in the host Golgi apparatus membrane. Its subcellular location is the host endoplasmic reticulum membrane. It is found in the host mitochondrion. In terms of biological role, forms homotetramers with glycoprotein C at the surface of the virion. Attaches the virion to host cell receptors including integrin ITGAV/ITGB3. This attachment induces virion internalization predominantly through clathrin-dependent endocytosis. Mediates the assembly and budding of infectious virus particles through its interaction with the nucleocapsid protein and the viral genome. May dysregulate normal immune and endothelial cell responses through an ITAM motif. Translocates to mitochondria, binds to host TUFM and recruits MAP1LC3B. These interactions induce mitochondrial autophagy and therefore destruction of host MAVS leading to inhibition of type I interferon (IFN) responses. Concomitant breakdown of glycoprotein N is apparently prevented by the nucleoprotein that may inhibit Gn-stimulated autophagosome-lysosome fusion. Interacts with the viral genomic RNA. Its function is as follows. Forms homotetramers with glycoprotein N at the surface of the virion. Attaches the virion to host cell receptors including integrin ITGAV/ITGB3. This attachment induces virion internalization predominantly through clathrin-dependent endocytosis. Class II fusion protein that promotes fusion of viral membrane with host endosomal membrane after endocytosis of the virion. The chain is Envelopment polyprotein (GP) from Homo sapiens (Human).